A 504-amino-acid chain; its full sequence is Maturase K (504 aa).

Belongs to the intron maturase 2 family. MatK subfamily.

The protein resides in the plastid. The protein localises to the chloroplast. Its function is as follows. Usually encoded in the trnK tRNA gene intron. Probably assists in splicing its own and other chloroplast group II introns. This Quercus robur (English oak) protein is Maturase K.